Here is a 225-residue protein sequence, read N- to C-terminus: 7-cyano-7-deazaguanine synthase (225 aa).

Residue 10-20 (VSGGLDSTTAL) coordinates ATP. Residues cysteine 189, cysteine 199, cysteine 202, and cysteine 205 each coordinate Zn(2+).

The protein belongs to the QueC family. It depends on Zn(2+) as a cofactor.

The catalysed reaction is 7-carboxy-7-deazaguanine + NH4(+) + ATP = 7-cyano-7-deazaguanine + ADP + phosphate + H2O + H(+). It functions in the pathway purine metabolism; 7-cyano-7-deazaguanine biosynthesis. In terms of biological role, catalyzes the ATP-dependent conversion of 7-carboxy-7-deazaguanine (CDG) to 7-cyano-7-deazaguanine (preQ(0)). This is 7-cyano-7-deazaguanine synthase from Saccharophagus degradans (strain 2-40 / ATCC 43961 / DSM 17024).